The following is a 44-amino-acid chain: Photosystem I reaction center subunit IX (44 aa).

Residues 9–29 (WFRSAPVVATIWIVLTAGILV) traverse the membrane as a helical segment.

It belongs to the PsaJ family.

The protein resides in the cellular thylakoid membrane. In terms of biological role, may help in the organization of the PsaE and PsaF subunits. The chain is Photosystem I reaction center subunit IX from Prochlorococcus marinus (strain MIT 9211).